Here is a 718-residue protein sequence, read N- to C-terminus: Gephyrin (718 aa).

Positions 1–19 are enriched in polar residues; that stretch reads MSNTLTTERNITNSPTAAQ. The interval 1-26 is disordered; that stretch reads MSNTLTTERNITNSPTAAQLNEKESG. Positions 31 to 176 are MPT Mo-transferase; sequence EWIVGVLTTS…LPGSVKAIRE (146 aa). A compositionally biased stretch (low complexity) spans 222–244; sequence NQNNQNNNNNNNNNNNNNNNNNS. 2 disordered regions span residues 222–266 and 344–364; these read NQNN…SSYN and TGEN…NDDD. Residues 245 to 254 show a composition bias toward basic residues; that stretch reads HNHHHHHHHS. The interval 260–718 is MPT adenylyltransferase; the sequence is KRGSSYNMTP…KAILIGPINN (459 aa).

The protein in the N-terminal section; belongs to the MoaB/Mog family. In the C-terminal section; belongs to the MoeA family. In terms of assembly, homotrimer, homodimer and homooligomer. Requires Mg(2+) as cofactor.

Its subcellular location is the cell membrane. It is found in the cytoplasm. The protein localises to the cytosol. It localises to the cytoskeleton. The enzyme catalyses molybdopterin + ATP + H(+) = adenylyl-molybdopterin + diphosphate. The catalysed reaction is adenylyl-molybdopterin + molybdate = Mo-molybdopterin + AMP + H(+). The protein operates within cofactor biosynthesis; molybdopterin biosynthesis. Functionally, microtubule-associated protein involved in membrane protein-cytoskeleton interactions. Also has a catalytic activity and catalyzes two steps in the biosynthesis of the molybdenum cofactor. In the first step, molybdopterin is adenylated. Subsequently, molybdate is inserted into adenylated molybdopterin and AMP is released. The polypeptide is Gephyrin (gphn) (Dictyostelium discoideum (Social amoeba)).